Here is a 373-residue protein sequence, read N- to C-terminus: SUN domain-containing protein 5 (373 aa).

Over 1 to 103 (MPRTRNIGAL…LFCQKVMEKM (103 aa)) the chain is Nuclear. Residues 104–120 (GLLVLCVFGFWMFSMHL) form a helical membrane-spanning segment. Over 121-373 (PSKVEVWQDD…PKDSHLEPLS (253 aa)) the chain is Perinuclear space. Positions 136–180 (LQSLRMYQEKVRHHTGEIQDLRGSMNQLIAKLQKMEAISDEQKMA) form a coiled coil. Residues 204–362 (ASIDFEHTSA…YRVRVHGSVT (159 aa)) form the SUN domain.

Probable homotrimer. Interacts with DNAJB13. Highly glycosylated in the Golgi apparatus during spermiogenesis. In terms of tissue distribution, testis-specific, abundantly expressed in spermatocytes and round spermatids.

The protein resides in the nucleus inner membrane. It is found in the golgi apparatus. In terms of biological role, plays an essential role in anchoring sperm head to the tail. Is responsible for the attachment of the coupling apparatus to the sperm nuclear envelope. The polypeptide is SUN domain-containing protein 5 (Sun5) (Mus musculus (Mouse)).